The following is a 378-amino-acid chain: Anhydro-N-acetylmuramic acid kinase (378 aa).

9-16 serves as a coordination point for ATP; it reads GTSVDGID.

It belongs to the anhydro-N-acetylmuramic acid kinase family.

The enzyme catalyses 1,6-anhydro-N-acetyl-beta-muramate + ATP + H2O = N-acetyl-D-muramate 6-phosphate + ADP + H(+). The protein operates within amino-sugar metabolism; 1,6-anhydro-N-acetylmuramate degradation. It functions in the pathway cell wall biogenesis; peptidoglycan recycling. Functionally, catalyzes the specific phosphorylation of 1,6-anhydro-N-acetylmuramic acid (anhMurNAc) with the simultaneous cleavage of the 1,6-anhydro ring, generating MurNAc-6-P. Is required for the utilization of anhMurNAc either imported from the medium or derived from its own cell wall murein, and thus plays a role in cell wall recycling. In Microcystis aeruginosa (strain NIES-843 / IAM M-2473), this protein is Anhydro-N-acetylmuramic acid kinase.